The primary structure comprises 84 residues: uncharacterized protein (84 aa).

The next 3 membrane-spanning stretches (helical) occupy residues 4-20 (AYVL…IKYG), 27-49 (VWKA…WIAF), and 59-81 (IGLA…VYVL).

The protein localises to the cell membrane. This is an uncharacterized protein from Archaeoglobus fulgidus (strain ATCC 49558 / DSM 4304 / JCM 9628 / NBRC 100126 / VC-16).